The primary structure comprises 659 residues: Acetyl-coenzyme A synthetase (659 aa).

CoA contacts are provided by residues 206–209 (RRGK) and threonine 324. Residues 400-402 (GEP), 424-429 (DTWWQT), aspartate 516, arginine 531, and arginine 542 contribute to the ATP site. Mg(2+)-binding residues include valine 553 and histidine 555. Residue arginine 600 participates in CoA binding.

This sequence belongs to the ATP-dependent AMP-binding enzyme family. Requires Mg(2+) as cofactor.

It catalyses the reaction acetate + ATP + CoA = acetyl-CoA + AMP + diphosphate. Catalyzes the conversion of acetate into acetyl-CoA (AcCoA), an essential intermediate at the junction of anabolic and catabolic pathways. AcsA undergoes a two-step reaction. In the first half reaction, AcsA combines acetate with ATP to form acetyl-adenylate (AcAMP) intermediate. In the second half reaction, it can then transfer the acetyl group from AcAMP to the sulfhydryl group of CoA, forming the product AcCoA. The chain is Acetyl-coenzyme A synthetase (acsA) from Methanothrix thermoacetophila (strain DSM 6194 / JCM 14653 / NBRC 101360 / PT) (Methanosaeta thermophila).